A 769-amino-acid chain; its full sequence is Glutathione biosynthesis bifunctional protein GshAB (769 aa).

Positions 1 to 347 are glutamate--cysteine ligase; it reads MLDSFKEDPN…QLADENENNI (347 aa). One can recognise an ATP-grasp domain in the interval 514-768; sequence KLVLAEHDIR…IGDKILDFLF (255 aa). ATP is bound at residue 541–599; that stretch reads SLFEDKQIVVKPKSTNYGWGISIFKNKFTLEDYQEALNIAFSYDSSVIIEEFIPGDEFR. Residues Asp-721, Glu-738, and Asn-740 each coordinate Mg(2+). Mn(2+) is bound by residues Asp-721, Glu-738, and Asn-740.

In the N-terminal section; belongs to the glutamate--cysteine ligase type 1 family. Type 2 subfamily. Monomer. It depends on Mg(2+) as a cofactor. Mn(2+) is required as a cofactor.

It carries out the reaction L-cysteine + L-glutamate + ATP = gamma-L-glutamyl-L-cysteine + ADP + phosphate + H(+). It catalyses the reaction gamma-L-glutamyl-L-cysteine + glycine + ATP = glutathione + ADP + phosphate + H(+). Its pathway is sulfur metabolism; glutathione biosynthesis; glutathione from L-cysteine and L-glutamate: step 1/2. The protein operates within sulfur metabolism; glutathione biosynthesis; glutathione from L-cysteine and L-glutamate: step 2/2. Functionally, synthesizes glutathione from L-glutamate and L-cysteine via gamma-L-glutamyl-L-cysteine. The sequence is that of Glutathione biosynthesis bifunctional protein GshAB from Listeria monocytogenes serovar 1/2a (strain ATCC BAA-679 / EGD-e).